An 855-amino-acid polypeptide reads, in one-letter code: Valine--tRNA ligase (855 aa).

Positions 44–54 (PYPTGNFHIGN) match the 'HIGH' region motif. Positions 522–526 (KMSKS) match the 'KMSKS' region motif. Residue Lys-525 participates in ATP binding.

Belongs to the class-I aminoacyl-tRNA synthetase family. ValS type 2 subfamily.

Its subcellular location is the cytoplasm. It carries out the reaction tRNA(Val) + L-valine + ATP = L-valyl-tRNA(Val) + AMP + diphosphate. Functionally, catalyzes the attachment of valine to tRNA(Val). As ValRS can inadvertently accommodate and process structurally similar amino acids such as threonine, to avoid such errors, it has a 'posttransfer' editing activity that hydrolyzes mischarged Thr-tRNA(Val) in a tRNA-dependent manner. The polypeptide is Valine--tRNA ligase (Methanothrix thermoacetophila (strain DSM 6194 / JCM 14653 / NBRC 101360 / PT) (Methanosaeta thermophila)).